The sequence spans 287 residues: Putative esterase/lipase HI_0193 (287 aa).

The region spanning 47–273 is the AB hydrolase-1 domain; sequence PVLIFIHGLF…SGHWVHAEKP (227 aa). Residues serine 119 and histidine 266 contribute to the active site.

It belongs to the DmpD/TodF/XylF esterase family.

The sequence is that of Putative esterase/lipase HI_0193 from Haemophilus influenzae (strain ATCC 51907 / DSM 11121 / KW20 / Rd).